Consider the following 149-residue polypeptide: D-aminoacyl-tRNA deacylase (149 aa).

A Gly-cisPro motif, important for rejection of L-amino acids motif is present at residues 137–138; it reads GP.

The protein belongs to the DTD family. Homodimer.

Its subcellular location is the cytoplasm. The catalysed reaction is glycyl-tRNA(Ala) + H2O = tRNA(Ala) + glycine + H(+). The enzyme catalyses a D-aminoacyl-tRNA + H2O = a tRNA + a D-alpha-amino acid + H(+). In terms of biological role, an aminoacyl-tRNA editing enzyme that deacylates mischarged D-aminoacyl-tRNAs. Also deacylates mischarged glycyl-tRNA(Ala), protecting cells against glycine mischarging by AlaRS. Acts via tRNA-based rather than protein-based catalysis; rejects L-amino acids rather than detecting D-amino acids in the active site. By recycling D-aminoacyl-tRNA to D-amino acids and free tRNA molecules, this enzyme counteracts the toxicity associated with the formation of D-aminoacyl-tRNA entities in vivo and helps enforce protein L-homochirality. This chain is D-aminoacyl-tRNA deacylase, found in Koribacter versatilis (strain Ellin345).